A 536-amino-acid chain; its full sequence is Fanconi anemia group E protein (536 aa).

Residues 150–371 are interaction with FANCC; the sequence is MEGASPLSER…VLTRSLFLGR (222 aa). A disordered region spans residues 171 to 252; it reads LGLGGRRLKS…ADGGSASPIK (82 aa). Residues 230-239 are compositionally biased toward basic and acidic residues; that stretch reads EKERPEHKSL. Ser-249 bears the Phosphoserine mark. Thr-346 carries the post-translational modification Phosphothreonine; by CHEK1. Ser-374 bears the Phosphoserine; by CHEK1 mark.

As to quaternary structure, belongs to the multisubunit FA complex composed of FANCA, FANCB, FANCC, FANCE, FANCF, FANCG, FANCL/PHF9 and FANCM. The complex is not found in FA patients. Interacts with FANCC and FANCD2. In terms of processing, phosphorylated. Phosphorylation by CHEK1 at Thr-346 and Ser-374 regulates its function in DNA cross-links repair. Post-translationally, ubiquitinated. Phosphorylation by CHEK1 induces polyubiquitination and degradation.

It localises to the nucleus. In terms of biological role, as part of the Fanconi anemia (FA) complex functions in DNA cross-links repair. Required for the nuclear accumulation of FANCC and provides a critical bridge between the FA complex and FANCD2. In Homo sapiens (Human), this protein is Fanconi anemia group E protein (FANCE).